A 421-amino-acid polypeptide reads, in one-letter code: MDSILVTGNGPLNGQIPIAGAKNACLTLMPATLLSDEPLTLTNAPRLSDIKTMTLLLQSLGAEVSSLQDGKVLAMSSHDLTSHTADYDIVRKMRASNLVLGPMLARLGQAVVSLPGGCAIGARPMDLHIEALEALGAEIELRDGYLHAKAPGGLKGAVHEMRFASVGATENMVMAATLAKGTTVLKNAAREPEIVDLVRCLRAMGAQIEGEGTSTIEIQGVDRLHGATHQVVTDRIELGTYMLAPAICGGEVELLGGRLDLVGAFVEKLDAAGIDVAETDKGLKVSRRNGRVSAVNVTTEPFPGFPTDLQAQMMALLCTAEGTSVLEEKIFENRFMHAPELTRMGARIEVHGGTATVRGVERLKGAPVMATDLRASVSLILAGLAAEGETLVSRVYHLDRGYEHVVQKLEAVGARIERIKG.

A phosphoenolpyruvate-binding site is contributed by 22-23 (KN). Position 94 (R94) interacts with UDP-N-acetyl-alpha-D-glucosamine. The active-site Proton donor is the C118. A 2-(S-cysteinyl)pyruvic acid O-phosphothioketal modification is found at C118. Residues 123-127 (RPMDL), D308, and I330 contribute to the UDP-N-acetyl-alpha-D-glucosamine site.

This sequence belongs to the EPSP synthase family. MurA subfamily.

It localises to the cytoplasm. It carries out the reaction phosphoenolpyruvate + UDP-N-acetyl-alpha-D-glucosamine = UDP-N-acetyl-3-O-(1-carboxyvinyl)-alpha-D-glucosamine + phosphate. It participates in cell wall biogenesis; peptidoglycan biosynthesis. Functionally, cell wall formation. Adds enolpyruvyl to UDP-N-acetylglucosamine. The sequence is that of UDP-N-acetylglucosamine 1-carboxyvinyltransferase from Ruegeria pomeroyi (strain ATCC 700808 / DSM 15171 / DSS-3) (Silicibacter pomeroyi).